Consider the following 418-residue polypeptide: Pestheic acid cluster transcriptional regulator 1 (418 aa).

Positions 244–272 (GTAVTTTATTSSSFISKSSEEPSPKRIKP) are disordered. Positions 245–260 (TAVTTTATTSSSFISK) are enriched in low complexity.

The protein localises to the nucleus. Transcription factor that, with ptaR2 and ptaR3, coregulates the expression of the gene cluster that mediates the biosynthesis of pestheic acid, a diphenyl ether which is a biosynthetic precursor of the unique chloropupukeananes. The sequence is that of Pestheic acid cluster transcriptional regulator 1 from Pestalotiopsis fici (strain W106-1 / CGMCC3.15140).